A 579-amino-acid polypeptide reads, in one-letter code: MFS-type transporter olcL (579 aa).

The segment covering 1–24 has biased composition (polar residues); the sequence is MANIGGSNAVSSAQGSQISDSPTT. The tract at residues 1–75 is disordered; it reads MANIGGSNAV…GFGEDGCQSD (75 aa). The span at 25–35 shows a compositional bias: basic and acidic residues; it reads VDDRLDEHKET. A compositionally biased stretch (polar residues) spans 36-54; the sequence is STQSIDHSENITQSPTSLQ. A glycan (N-linked (GlcNAc...) asparagine) is linked at Asn45. A run of 9 helical transmembrane segments spans residues 85 to 105, 121 to 141, 159 to 179, 183 to 203, 214 to 234, 241 to 261, 282 to 302, 310 to 330, and 355 to 375; these read LAAIMIGVCLAVFSMALDNTI, GDVGWYGSVYPLTNCCLTLVF, AVFEIGSLICGATPSSLGLII, IAGLGSSGIYLGSMIILSQSV, LVGGLYGVAGVAGPLLGGAFT, WCFYINPLFGAVTALFILLFF, LIGLFFFLPGMISLLLALQWG, SGRIIGLFVCSICLLSIFIMV, and LFNFCITGSFLVFSYYLPVWF. A glycan (N-linked (GlcNAc...) asparagine) is linked at Asn380. Helical transmembrane passes span 388–408, 411–431, 439–459, 479–501, and 553–573; these read LMNLPMLLGVILCSIISGYGV, IGYYTPFMYAAPIVSAIGAGL, FGPSQWIGYQALYGIGLGLGL, IAIVTFIQSLGGSVSVSIAQNVF, and FYVGAAFSVLAMIGALPIQWI.

The protein belongs to the major facilitator superfamily. TCR/Tet family.

It is found in the peroxisome membrane. Its function is as follows. MFS-type transporter; part of the gene cluster that mediates the biosynthesis of 15-deoxyoxalicine B. The first step of the pathway is the synthesis of nicotinyl-CoA from nicotinic acid by the nicotinic acid-CoA ligase olcI. Nicotinyl-CoA is then a substrate of polyketide synthase olcA to produce 4-hydroxy-6-(3-pyridinyl)-2H-pyran-2-one (HPPO) which is further prenylated by the polyprenyl transferase olcH to yield geranylgeranyl-HPPO. Geranylgeranyl pyrophosphate is provided by the cluster-specific geranylgeranyl pyrophosphate synthase olcC. The FAD-dependent monooxygenase olcE catalyzes the epoxidation of geranylgeranyl-HPPO and the terpene cyclase olcD catalyzes the cyclization of the terpenoid component, resulting in the formation of the tricyclic terpene moiety seen in predecaturin E. The cytochrome P450 monooxygenase then catalyzes the allylic oxidation of predecaturin E, which is followed by spirocylization with concomitant loss of one molecule of water to form decaturin E. Decaturin E is the substrate of the cytochrome P450 monooxygenase olcJ which hydroxylates it at the C-29 position to form decaturin F. The short-chain dehydrogenase/reductase olcF may catalyze the oxidation of decaturin F to generate the 29-hydroxyl-27-one intermediate, and subsequent hemiacetal formation probably leads to the formation of decaturin C. The dioxygenase olcK may be a peroxisomal enzyme that catalyzes the hydroxylation of decaturin C into decaturin A once decaturin C is shuttled into the peroxisome by the MFS transporter olcL. Finally the cytochrome P450 monooxygenase olcB catalyzes the oxidative rearrangement to yield 15-deoxyoxalicine B. In the absence of olcJ, decaturin E may be shunted to a pathway in which it is oxidized to a ketone, possibly by olcF, to form decaturin D, which undergoes further allylic oxidation to yield decaturin G. Moreover, in the absence of oclK or oclL, oclB can convert decaturin C into 15-deoxyoxalicine A. The polypeptide is MFS-type transporter olcL (Penicillium canescens).